Consider the following 356-residue polypeptide: Geranylgeranyl pyrophosphate synthase penG (356 aa).

Positions 83, 86, and 115 each coordinate isopentenyl diphosphate. Mg(2+) contacts are provided by Asp-122 and Asp-126. Arg-131 provides a ligand contact to dimethylallyl diphosphate. Arg-132 is a binding site for isopentenyl diphosphate. The dimethylallyl diphosphate site is built by Lys-209, Thr-210, and Gln-243. Residue Asp-246 coordinates Mg(2+). Dimethylallyl diphosphate-binding residues include Asn-250, Lys-260, and Lys-270.

The protein belongs to the FPP/GGPP synthase family. The cofactor is Mg(2+).

The enzyme catalyses isopentenyl diphosphate + dimethylallyl diphosphate = (2E)-geranyl diphosphate + diphosphate. It catalyses the reaction isopentenyl diphosphate + (2E)-geranyl diphosphate = (2E,6E)-farnesyl diphosphate + diphosphate. The catalysed reaction is isopentenyl diphosphate + (2E,6E)-farnesyl diphosphate = (2E,6E,10E)-geranylgeranyl diphosphate + diphosphate. It participates in secondary metabolite biosynthesis. Geranylgeranyl pyrophosphate synthase; part of the gene cluster that mediates the biosynthesis of the indole diterpenes penitrems. The geranylgeranyl diphosphate (GGPP) synthase ptmG catalyzes the first step in penitrem biosynthesis via conversion of farnesyl pyrophosphate and isopentyl pyrophosphate into geranylgeranyl pyrophosphate (GGPP). Condensation of indole-3-glycerol phosphate with GGPP by the prenyl transferase ptmC then forms 3-geranylgeranylindole (3-GGI). Epoxidation by the FAD-dependent monooxygenase ptmM leads to a epoxidized-GGI that is substrate of the terpene cyclase ptmB for cyclization to yield paspaline. Paspaline is subsequently converted to 13-desoxypaxilline by the cytochrome P450 monooxygenase ptmP, the latter being then converted to paxilline by the cytochrome P450 monooxygenase ptmQ. Paxilline is converted to beta-paxitriol via C-10 ketoreduction by the short-chain dehydrogenase ptmH which can be monoprenylated at the C-20 by the indole diterpene prenyltransferase ptmD. A two-step elimination (acetylation and elimination) process performed by the O-acetyltransferase ptmV and ptmI leads to the production of the prenylated form of penijanthine. The FAD-linked oxidoreductase ptmO then converts the prenylated form of penijanthine into PC-M5 which is in turn transformed into PC-M4 by the aromatic dimethylallyltransferase ptmE. Five sequential oxidative transformations performed by the cytochrome P450 monooxygenases ptmK, ptmU, ptmL, ptmN and ptmJ yield the various penitrem compounds. PtmK, ptmU and ptmM are involved in the formation of the key bicyclic ring of penitrem C via the formation of the intermediates secopenitrem D and penitrem D. PtmL catalyzes the epoxidation of penitrem D and C to yield penitrem B and F, respectively. PtmJ catalyzes the last benzylic hydroxylation to convert penitrem B to prenitrem E and penitrem F to penitrem A. In Penicillium ochrochloron, this protein is Geranylgeranyl pyrophosphate synthase penG.